Consider the following 451-residue polypeptide: Probable V-type proton ATPase subunit H 1 (451 aa).

It belongs to the V-ATPase H subunit family. As to quaternary structure, V-ATPase is a heteromultimeric enzyme made up of two complexes: the ATP-hydrolytic V1 complex and the proton translocation V0 complex. The V1 complex consists of three catalytic AB heterodimers that form a heterohexamer, three peripheral stalks each consisting of EG heterodimers, one central rotor including subunits D and F, and the regulatory subunits C and H. The proton translocation complex V0 consists of the proton transport subunit a, a ring of proteolipid subunits c9c'', rotary subunit d, subunits e and f, and the accessory subunits vah-19/Ac45 and vah-20/PRR.

Subunit of the V1 complex of vacuolar(H+)-ATPase (V-ATPase), a multisubunit enzyme composed of a peripheral complex (V1) that hydrolyzes ATP and a membrane integral complex (V0) that translocates protons. V-ATPase is responsible for acidifying and maintaining the pH of intracellular compartments and in some cell types, is targeted to the plasma membrane, where it is responsible for acidifying the extracellular environment. Subunit H is essential for V-ATPase activity, but not for the assembly of the complex. The polypeptide is Probable V-type proton ATPase subunit H 1 (Caenorhabditis elegans).